The sequence spans 59 residues: Putative conotoxin (59 aa).

The N-terminal stretch at 1 to 25 is a signal peptide; sequence MGMRMMFTVFLLVVLATTVVPITLA. The propeptide occupies 26 to 47; the sequence is SATDGRNAAANARVSPVISKSS.

The protein belongs to the conotoxin A superfamily. Expressed by the venom duct.

The protein resides in the secreted. Its function is as follows. Acts as a neurotoxin. The protein is Putative conotoxin of Conus imperialis (Imperial cone).